We begin with the raw amino-acid sequence, 144 residues long: Maximins 6/H10 (144 aa).

The N-terminal stretch at 1–18 (MNFKYIVAVSFLIASAYA) is a signal peptide. The propeptide occupies 19 to 43 (RSVKNDEQSLSQRDVLDEESLREIR). Asn-70 bears the Asparagine amide mark. A propeptide spanning residues 74-123 (TAEDHEVMKRLEAVMRDLDSLDHPEEASERETRGFNQEEIANRFTKKEKR) is cleaved from the precursor. Leu-143 bears the Leucine amide mark.

The protein belongs to the bombinin family. Expressed by the skin glands.

It localises to the secreted. In terms of biological role, maximin-6 shows antimicrobial activity against bacteria and against the fungus C.albicans. It has little hemolytic activity. Functionally, maximin-H10 shows antimicrobial activity against bacteria and against the fungus C.albicans. Shows strong hemolytic activity. This Bombina maxima (Giant fire-bellied toad) protein is Maximins 6/H10.